We begin with the raw amino-acid sequence, 555 residues long: GPI-anchor transamidase component PIGS (555 aa).

Over 2-18 the chain is Cytoplasmic; it reads ATAGAAATDLEVVRGKR. Arg-15 and Arg-18 together coordinate a cardiolipin. Residues 19 to 39 traverse the membrane as a helical segment; that stretch reads AALFFAAVAILLGLPLWWKTT. Residues 40-517 are Lumenal-facing; it reads ETYRAPLPYS…LHLLYFPDDQ (478 aa). Asn-267 and Asn-370 each carry an N-linked (GlcNAc...) asparagine glycan. A helical transmembrane segment spans residues 518–532; that stretch reads KFAIYIPLFLPMAVP. Over 533–555 the chain is Cytoplasmic; the sequence is ILLSLVKIFLETHKSWKKPEKID.

The protein belongs to the PIGS family. In terms of assembly, heteropentamer. Part of the GPI-anchor transamidase complex, consisting of PIGK, PIGT, PIGS, PIGU and GAA1.

It is found in the endoplasmic reticulum membrane. It participates in glycolipid biosynthesis; glycosylphosphatidylinositol-anchor biosynthesis. Functionally, component of the glycosylphosphatidylinositol-anchor (GPI-anchor) transamidase (GPI-T) complex that catalyzes the formation of the linkage between a proprotein and a GPI-anchor and participates in GPI anchored protein biosynthesis. The polypeptide is GPI-anchor transamidase component PIGS (Rattus norvegicus (Rat)).